The chain runs to 397 residues: Chorismate synthase (397 aa).

2 residues coordinate NADP(+): R40 and R46. Residues 129–131, 257–258, G302, 317–321, and R343 each bind FMN; these read RSS, QA, and KPISS.

This sequence belongs to the chorismate synthase family. Homotetramer. Requires FMNH2 as cofactor.

It carries out the reaction 5-O-(1-carboxyvinyl)-3-phosphoshikimate = chorismate + phosphate. Its pathway is metabolic intermediate biosynthesis; chorismate biosynthesis; chorismate from D-erythrose 4-phosphate and phosphoenolpyruvate: step 7/7. Functionally, catalyzes the anti-1,4-elimination of the C-3 phosphate and the C-6 proR hydrogen from 5-enolpyruvylshikimate-3-phosphate (EPSP) to yield chorismate, which is the branch point compound that serves as the starting substrate for the three terminal pathways of aromatic amino acid biosynthesis. This reaction introduces a second double bond into the aromatic ring system. This is Chorismate synthase from Chlorobium limicola (strain DSM 245 / NBRC 103803 / 6330).